Reading from the N-terminus, the 158-residue chain is NAD(P)H-quinone oxidoreductase subunit J, chloroplastic (158 aa).

The protein belongs to the complex I 30 kDa subunit family. As to quaternary structure, NDH is composed of at least 16 different subunits, 5 of which are encoded in the nucleus.

It is found in the plastid. It localises to the chloroplast thylakoid membrane. It carries out the reaction a plastoquinone + NADH + (n+1) H(+)(in) = a plastoquinol + NAD(+) + n H(+)(out). It catalyses the reaction a plastoquinone + NADPH + (n+1) H(+)(in) = a plastoquinol + NADP(+) + n H(+)(out). Functionally, NDH shuttles electrons from NAD(P)H:plastoquinone, via FMN and iron-sulfur (Fe-S) centers, to quinones in the photosynthetic chain and possibly in a chloroplast respiratory chain. The immediate electron acceptor for the enzyme in this species is believed to be plastoquinone. Couples the redox reaction to proton translocation, and thus conserves the redox energy in a proton gradient. This is NAD(P)H-quinone oxidoreductase subunit J, chloroplastic from Cucumis sativus (Cucumber).